The following is a 691-amino-acid chain: Probable serine/threonine-protein kinase pXi (691 aa).

A Protein kinase domain is found at 18–263; that stretch reads YEIGSQIGNG…IDQTLKHPWI (246 aa). Residues 24 to 32 and lysine 47 each bind ATP; that span reads IGNGKFAQV. Aspartate 137 (proton acceptor) is an active-site residue. 4 disordered regions span residues 314 to 350, 420 to 447, 510 to 536, and 600 to 620; these read TPIK…ENEN, ENDS…KFTS, QHNN…GNGT, and GGSG…KKDK. The span at 322–336 shows a compositional bias: low complexity; sequence NNNNNNNNNNNNNNN. Over residues 338–350 the composition is skewed to basic and acidic residues; the sequence is ILDKKSNENENEN. Low complexity-rich tracts occupy residues 423–433, 512–536, and 600–615; these read SSSSETYSSSS, NNNI…GNGT, and GGSG…TGGS. Positions 642–691 form a coiled coil; the sequence is PKETMDKLASVLSNYKQKNQEKSLKVKYEKQKDKYKKLKSQLKKDKSLLK.

This sequence belongs to the protein kinase superfamily. CAMK Ser/Thr protein kinase family.

The enzyme catalyses L-seryl-[protein] + ATP = O-phospho-L-seryl-[protein] + ADP + H(+). The catalysed reaction is L-threonyl-[protein] + ATP = O-phospho-L-threonyl-[protein] + ADP + H(+). This Dictyostelium discoideum (Social amoeba) protein is Probable serine/threonine-protein kinase pXi (pXi).